Reading from the N-terminus, the 43-residue chain is Holotricin-1 (43 aa).

3 disulfides stabilise this stretch: cysteine 3/cysteine 34, cysteine 20/cysteine 39, and cysteine 24/cysteine 41.

This sequence belongs to the invertebrate defensin family. Type 1 subfamily. As to expression, hemolymph.

It localises to the secreted. In terms of biological role, shows potent antibacterial activity against Gram-positive bacteria. The protein is Holotricin-1 of Holotrichia diomphalia (Korean black chafer).